The following is a 180-amino-acid chain: Adenine phosphoribosyltransferase (180 aa).

Belongs to the purine/pyrimidine phosphoribosyltransferase family. Homodimer.

Its subcellular location is the cytoplasm. The enzyme catalyses AMP + diphosphate = 5-phospho-alpha-D-ribose 1-diphosphate + adenine. The protein operates within purine metabolism; AMP biosynthesis via salvage pathway; AMP from adenine: step 1/1. In terms of biological role, catalyzes a salvage reaction resulting in the formation of AMP, that is energically less costly than de novo synthesis. The protein is Adenine phosphoribosyltransferase of Rhizobium meliloti (strain 1021) (Ensifer meliloti).